The primary structure comprises 98 residues: EKC/KEOPS complex subunit GON7 (98 aa).

Methionine 1 is subject to N-acetylmethionine. The interval 55–98 (DAQGLAEDPDDALDGDDEDDAEDENNSGRTNSDGPSAKRPKPAS) is disordered. The span at 61-79 (EDPDDALDGDDEDDAEDEN) shows a compositional bias: acidic residues.

As to quaternary structure, component of the EKC/KEOPS complex composed of at least GON7, TP53RK, TPRKB, OSGEP and LAGE3; the whole complex dimerizes.

The protein resides in the nucleus. Functionally, component of the EKC/KEOPS complex that is required for the formation of a threonylcarbamoyl group on adenosine at position 37 (t(6)A37) in tRNAs that read codons beginning with adenine. The complex is probably involved in the transfer of the threonylcarbamoyl moiety of threonylcarbamoyl-AMP (TC-AMP) to the N6 group of A37. GON7 plays a supporting role to the catalytic subunit OSGEP in the complex. This is EKC/KEOPS complex subunit GON7 from Mus musculus (Mouse).